A 194-amino-acid chain; its full sequence is MELLKNKIIEEGRVLSDTVLKVDSFLNHQVDPKLMKQVGEEFAKKFRNTGITKILTIESSGIAPATMTGLELDVPVIFARKRKSLTLTDHLFTAEVYSYTKKTSNEISVSKDFLHEDDIVLVMDDFLANGQAALGLLEIAKQAKATVVGVGIVIEKGFQTGGKQLRDKGIRVESLAIVESLSDGTVRFKEEARI.

Xanthine-binding residues include Leu-20 and Asn-27. 128–132 (ANGQA) provides a ligand contact to 5-phospho-alpha-D-ribose 1-diphosphate. Lys-156 provides a ligand contact to xanthine.

The protein belongs to the purine/pyrimidine phosphoribosyltransferase family. Xpt subfamily. As to quaternary structure, homodimer.

It localises to the cytoplasm. The enzyme catalyses XMP + diphosphate = xanthine + 5-phospho-alpha-D-ribose 1-diphosphate. The protein operates within purine metabolism; XMP biosynthesis via salvage pathway; XMP from xanthine: step 1/1. Converts the preformed base xanthine, a product of nucleic acid breakdown, to xanthosine 5'-monophosphate (XMP), so it can be reused for RNA or DNA synthesis. The chain is Xanthine phosphoribosyltransferase from Oceanobacillus iheyensis (strain DSM 14371 / CIP 107618 / JCM 11309 / KCTC 3954 / HTE831).